The sequence spans 481 residues: Trigger factor (481 aa).

Positions 174-261 constitute a PPIase FKBP-type domain; the sequence is GDIAVVSFKG…LKDLKEKELP (88 aa). Positions 435 to 481 are disordered; it reads VKEKTTKASQASKTTKAKKTTTKTTKATKTATKTTKATKTQNKKEKK. Low complexity predominate over residues 456–474; it reads TKTTKATKTATKTTKATKT.

The protein belongs to the FKBP-type PPIase family. Tig subfamily.

Its subcellular location is the cytoplasm. The enzyme catalyses [protein]-peptidylproline (omega=180) = [protein]-peptidylproline (omega=0). Involved in protein export. Acts as a chaperone by maintaining the newly synthesized protein in an open conformation. Functions as a peptidyl-prolyl cis-trans isomerase. This is Trigger factor from Prochlorococcus marinus (strain MIT 9312).